The following is a 230-amino-acid chain: 2-C-methyl-D-erythritol 4-phosphate cytidylyltransferase (230 aa).

The protein belongs to the IspD/TarI cytidylyltransferase family. IspD subfamily.

The enzyme catalyses 2-C-methyl-D-erythritol 4-phosphate + CTP + H(+) = 4-CDP-2-C-methyl-D-erythritol + diphosphate. The protein operates within isoprenoid biosynthesis; isopentenyl diphosphate biosynthesis via DXP pathway; isopentenyl diphosphate from 1-deoxy-D-xylulose 5-phosphate: step 2/6. In terms of biological role, catalyzes the formation of 4-diphosphocytidyl-2-C-methyl-D-erythritol from CTP and 2-C-methyl-D-erythritol 4-phosphate (MEP). In Shewanella halifaxensis (strain HAW-EB4), this protein is 2-C-methyl-D-erythritol 4-phosphate cytidylyltransferase.